Reading from the N-terminus, the 341-residue chain is MSLSQEIVSLVKEAETVLSSATTEQELDALKNQFLGKKGKLTSVLKGLASLTVEEKKTVGKEANEAQTKLEQFVEAKRTILKESFYENQLGKESFDTLRPLPKKERGSLHPISQIQYEIEDIFTSMGFSVMDGPEVETDENNFGALNFTEDHPARDMQDTFYTVDGNLLRTHTSAIQVRALRKLKPPFRIIAPGRVFRYEEVDASHENTFYQVEGMVVGENISVAHLIYTMETLLSRVFRKEIKTRLRPGYFPFVEPGFELDINCLVCSGDGCSVCKQSGWLELLPCGLVHPNVLEAAGLDSKKWTGFAFGLGLDRLVMMRYGIHDIRYFQSGNLRFLKQF.

A Mg(2+)-binding site is contributed by glutamate 256.

This sequence belongs to the class-II aminoacyl-tRNA synthetase family. Phe-tRNA synthetase alpha subunit type 1 subfamily. Tetramer of two alpha and two beta subunits. It depends on Mg(2+) as a cofactor.

It localises to the cytoplasm. It carries out the reaction tRNA(Phe) + L-phenylalanine + ATP = L-phenylalanyl-tRNA(Phe) + AMP + diphosphate + H(+). The polypeptide is Phenylalanine--tRNA ligase alpha subunit (Leptospira biflexa serovar Patoc (strain Patoc 1 / Ames)).